Reading from the N-terminus, the 473-residue chain is Spliceosome-associated protein CWC27 homolog (473 aa).

Residue S2 is modified to N-acetylserine. Positions 11–166 (TNGKVLLKTT…NSHKIRSCEV (156 aa)) constitute a PPIase cyclophilin-type domain. The segment covering 178–193 (EIKKPKKEKPEEEVKK) has biased composition (basic and acidic residues). Disordered regions lie at residues 178–197 (EIKK…LKPK), 203–383 (SLLS…TSRE), and 401–473 (IAET…KERR). Residues 206–230 (SFGEEAEEEEEEVNRVSQSMKGKSK) are a coiled coil. The segment covering 231–241 (SSHDLLKDDPH) has biased composition (basic and acidic residues). The Cell attachment site motif lies at 252 to 254 (RGD). Acidic residues predominate over residues 256–266 (AEDSDDDGEYE). 2 stretches are compositionally biased toward basic and acidic residues: residues 267–348 (GAEH…KRSE) and 360–372 (EYRR…EALR). Residues 311–378 (VSRSEELRKE…EALRKQQAKT (68 aa)) are a coiled coil. S347 carries the phosphoserine modification. The segment covering 405 to 419 (PENDISETEVEDDEG) has biased composition (acidic residues). 2 stretches are compositionally biased toward basic and acidic residues: residues 426-438 (QFED…KDAS) and 458-473 (RREE…KERR).

The protein belongs to the cyclophilin-type PPIase family. As to quaternary structure, part of the activated spliceosome B/catalytic step 1 spliceosome, one of the forms of the spliceosome which has a well-formed active site but still cannot catalyze the branching reaction and is composed at least of 52 proteins, the U2, U5 and U6 snRNAs and the pre-mRNA. Recruited during early steps of activated spliceosome B maturation, it is probably one of the first proteins released from this complex as he matures to the spliceosome C complex. Component of the minor spliceosome, which splices U12-type introns.

The protein localises to the nucleus. Functionally, as part of the spliceosome, plays a role in pre-mRNA splicing. Probable inactive PPIase with no peptidyl-prolyl cis-trans isomerase activity. As a component of the minor spliceosome, involved in the splicing of U12-type introns in pre-mRNAs. In Bos taurus (Bovine), this protein is Spliceosome-associated protein CWC27 homolog.